The sequence spans 662 residues: MEKQDRIKYLVDILNKYAYHYYTLDDPLIADSEYDVLYDELVNLEKETGIVLPNSPTNRIGGEVLSGFEKHEHLNTLYSLGKAQSKEEVRNWVDKTIEFVQNYNENHVNKLPKVEFYVEFKFDGLTVNLTYDGGYLVMATTRGNGTIGEVITSQVKTINSIPLKIKDTRLMEIQGEGVMPLSSLENYNKTHEPKLKNARNAAAGALRNLDPAVTRERNLDAYFYNVNYLQDNELETQEEMIKFLGDNYFKLYPYEKHATSFEEVSKFIDEIFELRNEIDVLTDGVVIKVNDFKTREKLGYTNKFPRWAIAYKFEPERFTTIVKEVEWNVGRTGKVTPTALLEPVEIGNVTVKRATLNNIDDIERKQVRLNSEVFVRRSNDVIPEIMGVVNPDQEDTEEIEIPHYCPYCHSELFRDGVHIFCPNSMSCTPQLVKRMVHFASRNAMNIDGLSEKTLEVLLEKLNIKSIEEIYDVKKEQLMQLDGFKEKKSQNLINAIEKSKNVDLANFIFALGIPEIGEKTSFELAQKYKSFDNLREAKFEELIQIEDIGNVIAEEIVEFFHDETISNSIDSLLSKGIKIKNPENIEKKLDNLTFVLTGSLVNYSRKELTDKLSNLGAKVSSSVSKNTDYVVYGEKAGSKLTKAKDLGVKLMTEDELNSFLDNL.

Residues 31 to 35, 79 to 80, and Glu119 each bind NAD(+); these read DSEYD and SL. The active-site N6-AMP-lysine intermediate is Lys121. NAD(+) is bound by residues Arg142, Glu176, Lys288, and Lys312. Cys405, Cys408, Cys421, and Cys427 together coordinate Zn(2+). A BRCT domain is found at 583 to 662; it reads NIEKKLDNLT…DELNSFLDNL (80 aa).

The protein belongs to the NAD-dependent DNA ligase family. LigA subfamily. Mg(2+) serves as cofactor. The cofactor is Mn(2+).

The enzyme catalyses NAD(+) + (deoxyribonucleotide)n-3'-hydroxyl + 5'-phospho-(deoxyribonucleotide)m = (deoxyribonucleotide)n+m + AMP + beta-nicotinamide D-nucleotide.. Its function is as follows. DNA ligase that catalyzes the formation of phosphodiester linkages between 5'-phosphoryl and 3'-hydroxyl groups in double-stranded DNA using NAD as a coenzyme and as the energy source for the reaction. It is essential for DNA replication and repair of damaged DNA. This Finegoldia magna (strain ATCC 29328 / DSM 20472 / WAL 2508) (Peptostreptococcus magnus) protein is DNA ligase.